Consider the following 502-residue polypeptide: UPF0371 protein CLB_0371 (502 aa).

Belongs to the UPF0371 family.

The chain is UPF0371 protein CLB_0371 from Clostridium botulinum (strain ATCC 19397 / Type A).